Here is a 478-residue protein sequence, read N- to C-terminus: Violaxanthin de-epoxidase, chloroplastic (478 aa).

A coiled-coil region spans residues 388–453 (LVERLEKKVE…RELSKEEMDV (66 aa)).

This sequence belongs to the calycin superfamily. Lipocalin family.

It is found in the plastid. The protein resides in the chloroplast thylakoid membrane. The catalysed reaction is all-trans-violaxanthin + 2 L-ascorbate = all-trans-zeaxanthin + 2 L-dehydroascorbate + 2 H2O. Part of the xanthophyll (or violaxanthin) cycle for controlling the concentration of zeaxanthin in chloroplasts. Catalyzes the two-step mono de-epoxidation reaction. Stereospecific for all-trans xanthophylls. Zeaxanthin induces the dissipation of excitation energy in the chlorophyll of the light-harvesting protein complex of photosystem II. This Nicotiana tabacum (Common tobacco) protein is Violaxanthin de-epoxidase, chloroplastic (VDE1).